A 273-amino-acid polypeptide reads, in one-letter code: R-spondin-3 (273 aa).

Residues 1–21 (MHLRLISWFFIILNFMEYIGS) form the signal peptide. 2 FU repeats span residues 35–86 (PNVS…GYYG) and 92–135 (INKC…GLEA). An N-linked (GlcNAc...) asparagine glycan is attached at N36. Cystine bridges form between C41/C48, C45/C54, C57/C76, C80/C95, C98/C105, C102/C111, C114/C125, C129/C142, C148/C190, C159/C166, and C199/C206. The region spanning 147–207 (HCEASEWSPW…KCTVQRKKCP (61 aa)) is the TSP type-1 domain. The interval 201-273 (VQRKKCPKGE…QKSVSVSTVH (73 aa)) is disordered. Over residues 213–223 (RKGRERKRKKP) the composition is skewed to basic residues. Positions 224-252 (NKEESKDAIPDNKGLEPSRETPEQRENKQ) are enriched in basic and acidic residues.

The protein belongs to the R-spondin family. Interacts with the extracellular domain of FZD8 and LRP6. It however does not form a ternary complex with FZD8 and LRP6. Interacts with WNT1. Binds heparin. Interacts with LGR4, LGR5 and LGR6.

Its subcellular location is the secreted. Functionally, activator of the canonical Wnt signaling pathway by acting as a ligand for LGR4-6 receptors, which acts as a key regulator of angiogenesis. Upon binding to LGR4-6 (LGR4, LGR5 or LGR6), LGR4-6 associate with phosphorylated LRP6 and frizzled receptors that are activated by extracellular Wnt receptors, triggering the canonical Wnt signaling pathway to increase expression of target genes. Also regulates the canonical Wnt/beta-catenin-dependent pathway and non-canonical Wnt signaling by acting as an inhibitor of ZNRF3, an important regulator of the Wnt signaling pathway. Acts as a ligand for frizzled FZD8 and LRP6. May negatively regulate the TGF-beta pathway. Acts as a key regulator of angiogenesis by controlling vascular stability and pruning: acts by activating the non-canonical Wnt signaling pathway in endothelial cells. Can also amplify Wnt signaling pathway independently of LGR4-6 receptors, possibly by acting as a direct antagonistic ligand to RNF43 and ZNRF3. The protein is R-spondin-3 (RSPO3) of Bos taurus (Bovine).